We begin with the raw amino-acid sequence, 220 residues long: MDGVLNFLTNINVIFTLLGYLIGGIPFGYALMKIFYGMDITKIGSGGIGATNVLRTLQSRGVSNAKQMALLILILDLFKGMFAVFLSKLFGLDYSLQWMVAIASILGHCYSPFLNFNGGKGVSTIMGSVVLLIPIESLIGLMVWFFVGKVLKISSLASIVGVGTATILIFFVPYMHIPDSVNILKEVGTQTPMVLIFIFTLIKHVGNIFNLLAGKEKKVL.

6 consecutive transmembrane segments (helical) span residues 11-31, 70-90, 96-116, 127-147, 153-173, and 193-213; these read INVIFTLLGYLIGGIPFGYAL, LLILILDLFKGMFAVFLSKLF, LQWMVAIASILGHCYSPFLNF, GSVVLLIPIESLIGLMVWFFV, ISSLASIVGVGTATILIFFVP, and MVLIFIFTLIKHVGNIFNLLA.

The protein belongs to the PlsY family. As to quaternary structure, probably interacts with PlsX.

Its subcellular location is the cell inner membrane. The catalysed reaction is an acyl phosphate + sn-glycerol 3-phosphate = a 1-acyl-sn-glycero-3-phosphate + phosphate. It participates in lipid metabolism; phospholipid metabolism. In terms of biological role, catalyzes the transfer of an acyl group from acyl-phosphate (acyl-PO(4)) to glycerol-3-phosphate (G3P) to form lysophosphatidic acid (LPA). This enzyme utilizes acyl-phosphate as fatty acyl donor, but not acyl-CoA or acyl-ACP. In Helicobacter acinonychis (strain Sheeba), this protein is Glycerol-3-phosphate acyltransferase.